A 138-amino-acid chain; its full sequence is Proofreading thioesterase EntH (138 aa).

Catalysis depends on glutamate 64, which acts as the Nucleophile or proton acceptor.

It belongs to the thioesterase PaaI family. As to quaternary structure, homotetramer. Dimer of dimers. Interacts specifically with the aryl carrier protein (ArCP) domain of EntB.

The protein resides in the cytoplasm. It functions in the pathway siderophore biosynthesis; enterobactin biosynthesis. Required for optimal enterobactin synthesis. Acts as a proofreading enzyme that prevents EntB misacylation by hydrolyzing the thioester bound existing between EntB and wrongly charged molecules. The sequence is that of Proofreading thioesterase EntH from Citrobacter rodentium (strain ICC168) (Citrobacter freundii biotype 4280).